The following is a 194-amino-acid chain: HTH-type transcriptional regulator BetI (194 aa).

Positions 8-68 constitute an HTH tetR-type domain; that stretch reads PLRRRELIDA…ATMRHLLREL (61 aa). The segment at residues 31-50 is a DNA-binding region (H-T-H motif); that stretch reads TVAQIAHEAGVSPALAHHYF.

Its pathway is amine and polyamine biosynthesis; betaine biosynthesis via choline pathway [regulation]. Repressor involved in the biosynthesis of the osmoprotectant glycine betaine. It represses transcription of the choline transporter BetT and the genes of BetAB involved in the synthesis of glycine betaine. The polypeptide is HTH-type transcriptional regulator BetI (Brucella anthropi (strain ATCC 49188 / DSM 6882 / CCUG 24695 / JCM 21032 / LMG 3331 / NBRC 15819 / NCTC 12168 / Alc 37) (Ochrobactrum anthropi)).